The primary structure comprises 524 residues: Cytosolic Fe-S cluster assembly factor NAR1 (524 aa).

Residues Cys20, Cys52, Cys55, Cys58, Cys158, and Cys206 each coordinate [4Fe-4S] cluster. Positions 362 to 388 (IRKRPTANGNDNSISLSSSINNQDNNN) are disordered. The span at 369 to 388 (NGNDNSISLSSSINNQDNNN) shows a compositional bias: low complexity. Residues Cys408 and Cys412 each coordinate [4Fe-4S] cluster. The disordered stretch occupies residues 501-524 (SSISETHNGDSKNTIEQPVQFTTW).

Belongs to the NARF family.

Component of the cytosolic Fe/S protein assembly machinery. Required for maturation of extramitochondrial Fe/S proteins. May play a role in the transfer of pre-assembled Fe/S clusters to target apoproteins. The polypeptide is Cytosolic Fe-S cluster assembly factor NAR1 (NAR1) (Vanderwaltozyma polyspora (strain ATCC 22028 / DSM 70294 / BCRC 21397 / CBS 2163 / NBRC 10782 / NRRL Y-8283 / UCD 57-17) (Kluyveromyces polysporus)).